The sequence spans 203 residues: Small ribosomal subunit protein eS1 (203 aa).

It belongs to the eukaryotic ribosomal protein eS1 family.

The polypeptide is Small ribosomal subunit protein eS1 (Methanosarcina acetivorans (strain ATCC 35395 / DSM 2834 / JCM 12185 / C2A)).